A 192-amino-acid polypeptide reads, in one-letter code: ATP synthase protein MI25 (192 aa).

The chain crosses the membrane as a helical span at residues 29–49; sequence ILIYNEEMIVALCFIGFIIFS.

It belongs to the ATPase protein MI25 family. In terms of assembly, F-type ATPases have 2 components, CF(1) - the catalytic core - and CF(0) - the membrane proton channel. CF(1) has five subunits: alpha(3), beta(3), gamma(1), delta(1), epsilon(1). CF(0) has three main subunits: a, b and c.

The protein localises to the mitochondrion membrane. In terms of biological role, this is one of the chains of the nonenzymatic component (CF(0) subunit) of the mitochondrial ATPase complex. This chain is ATP synthase protein MI25 (ATP4), found in Arabidopsis thaliana (Mouse-ear cress).